Here is a 127-residue protein sequence, read N- to C-terminus: MNVPAALRYTKDHEWIQLLDDGATALVGITDFAQSELGDIVFVELKPAGTALKEHEIFGTVEAVKTVADLFAPVAGEILEVNAGLDSAETVNQDPYGSGWMVKMKLADPASVANLLDAAAYRELIGG.

A Lipoyl-binding domain is found at 24–105 (TALVGITDFA…YGSGWMVKMK (82 aa)). Lysine 65 bears the N6-lipoyllysine mark.

Belongs to the GcvH family. As to quaternary structure, the glycine cleavage system is composed of four proteins: P, T, L and H. (R)-lipoate is required as a cofactor.

Functionally, the glycine cleavage system catalyzes the degradation of glycine. The H protein shuttles the methylamine group of glycine from the P protein to the T protein. The sequence is that of Glycine cleavage system H protein from Chlorobium luteolum (strain DSM 273 / BCRC 81028 / 2530) (Pelodictyon luteolum).